Consider the following 160-residue polypeptide: S-ribosylhomocysteine lyase (160 aa).

Residues His-57, His-61, and Cys-127 each coordinate Fe cation.

It belongs to the LuxS family. As to quaternary structure, homodimer. It depends on Fe cation as a cofactor.

It carries out the reaction S-(5-deoxy-D-ribos-5-yl)-L-homocysteine = (S)-4,5-dihydroxypentane-2,3-dione + L-homocysteine. Functionally, involved in the synthesis of autoinducer 2 (AI-2) which is secreted by bacteria and is used to communicate both the cell density and the metabolic potential of the environment. The regulation of gene expression in response to changes in cell density is called quorum sensing. Catalyzes the transformation of S-ribosylhomocysteine (RHC) to homocysteine (HC) and 4,5-dihydroxy-2,3-pentadione (DPD). The sequence is that of S-ribosylhomocysteine lyase from Streptococcus suis (strain 98HAH33).